The primary structure comprises 321 residues: L-Ala-D/L-Glu epimerase (321 aa).

Residues threonine 124 and lysine 149 each coordinate substrate. Lysine 151 acts as the Proton acceptor; specific for (R)-substrate epimerization in catalysis. 3 residues coordinate Mg(2+): aspartate 176, glutamate 202, and aspartate 225. Lysine 247 (proton acceptor; specific for (S)-substrate epimerization) is an active-site residue. Substrate contacts are provided by cysteine 275, aspartate 297, and aspartate 299.

It belongs to the mandelate racemase/muconate lactonizing enzyme family. As to quaternary structure, monomer. Requires Mg(2+) as cofactor.

The catalysed reaction is L-alanyl-L-glutamate = L-alanyl-D-glutamate. It functions in the pathway cell wall biogenesis; peptidoglycan recycling. Its function is as follows. Catalyzes the epimerization of L-Ala-D-Glu to L-Ala-L-Glu and has a role in the recycling of the murein peptide, of which L-Ala-D-Glu is a component. Is also able to catalyze the reverse reaction and the epimerization of all the L-Ala-X dipeptides, except L-Ala-L-Arg, L-Ala-L-Lys and L-Ala-L-Pro. Is also active with L-Gly-L-Glu, L-Phe-L-Glu, and L-Ser-L-Glu, but not with L-Glu-L-Glu, L-Lys-L-Glu, L-Pro-L-Glu, L-Lys-L-Ala, or D-Ala-D-Ala. The chain is L-Ala-D/L-Glu epimerase (ycjG) from Escherichia coli (strain K12).